Consider the following 161-residue polypeptide: Large ribosomal subunit protein uL11 (161 aa).

This sequence belongs to the universal ribosomal protein uL11 family. As to quaternary structure, part of the ribosomal stalk of the 50S ribosomal subunit. Interacts with L10 and the large rRNA to form the base of the stalk. L10 forms an elongated spine to which L12 dimers bind in a sequential fashion forming a multimeric L10(L12)X complex.

Its function is as follows. Forms part of the ribosomal stalk which helps the ribosome interact with GTP-bound translation factors. The polypeptide is Large ribosomal subunit protein uL11 (Methanosarcina acetivorans (strain ATCC 35395 / DSM 2834 / JCM 12185 / C2A)).